The following is a 763-amino-acid chain: Phosphoglycerol transferase I (763 aa).

4 helical membrane-spanning segments follow: residues 1 to 21 (MSEL…AWKA), 26 to 46 (WWFA…ITLF), 77 to 97 (ILPG…LGWI), and 108 to 128 (FGYS…SPAF).

The protein belongs to the OpgB family.

The protein resides in the cell inner membrane. It catalyses the reaction a phosphatidylglycerol + a membrane-derived-oligosaccharide D-glucose = a 1,2-diacyl-sn-glycerol + a membrane-derived-oligosaccharide 6-(glycerophospho)-D-glucose.. It functions in the pathway glycan metabolism; osmoregulated periplasmic glucan (OPG) biosynthesis. Its function is as follows. Transfers a phosphoglycerol residue from phosphatidylglycerol to the membrane-bound nascent glucan backbones. This chain is Phosphoglycerol transferase I, found in Escherichia coli (strain UTI89 / UPEC).